We begin with the raw amino-acid sequence, 396 residues long: Phosphoglycerate kinase (396 aa).

Substrate contacts are provided by residues 21–23 (DLN), arginine 36, 59–62 (HLGR), arginine 113, and arginine 146. Residues lysine 197, glutamate 319, and 345-348 (GGDT) each bind ATP.

Belongs to the phosphoglycerate kinase family. Monomer.

The protein localises to the cytoplasm. It carries out the reaction (2R)-3-phosphoglycerate + ATP = (2R)-3-phospho-glyceroyl phosphate + ADP. It functions in the pathway carbohydrate degradation; glycolysis; pyruvate from D-glyceraldehyde 3-phosphate: step 2/5. This Legionella pneumophila (strain Lens) protein is Phosphoglycerate kinase.